The sequence spans 223 residues: Alpha-S2-casein (223 aa).

An N-terminal signal peptide occupies residues Met-1–Ala-15. A phosphoserine mark is found at Ser-23, Ser-24, Ser-25, Ser-72, Ser-73, Ser-74, Ser-77, Ser-145, Ser-147, Ser-151, and Ser-159. Positions Ser-77 to Arg-141 form a repeat. The stretch at residues Ser-159–Leu-223 is a repeat.

It belongs to the alpha-casein family. In terms of tissue distribution, mammary gland specific. Secreted in milk.

It is found in the secreted. Functionally, important role in the capacity of milk to transport calcium phosphate. This chain is Alpha-S2-casein (CSN1S2), found in Ovis aries (Sheep).